The primary structure comprises 287 residues: 1-acyl-sn-glycerol-3-phosphate acyltransferase alpha (287 aa).

An N-terminal signal peptide occupies residues Met1–Trp26. Over Phe27–Lys37 the chain is Lumenal. A helical membrane pass occupies residues Met38–Val58. The Cytoplasmic portion of the chain corresponds to Arg59–Arg127. An HXXXXD motif motif is present at residues His104–Asp109. The chain crosses the membrane as a helical span at residues Glu128 to Asp148. Residues Arg149–Arg192 lie on the Lumenal side of the membrane. The EGTR motif signature appears at Glu178–Arg181.

The protein belongs to the 1-acyl-sn-glycerol-3-phosphate acyltransferase family.

It is found in the endoplasmic reticulum membrane. It catalyses the reaction a 1-acyl-sn-glycero-3-phosphate + an acyl-CoA = a 1,2-diacyl-sn-glycero-3-phosphate + CoA. It carries out the reaction 1-(9Z-octadecenoyl)-sn-glycero-3-phosphate + (9Z)-octadecenoyl-CoA = 1,2-di-(9Z-octadecenoyl)-sn-glycero-3-phosphate + CoA. The enzyme catalyses 1-(9Z-octadecenoyl)-sn-glycero-3-phosphate + hexadecanoyl-CoA = 1-(9Z)-octadecenoyl-2-hexadecanoyl-sn-glycero-3-phosphate + CoA. The catalysed reaction is heptadecanoyl-CoA + 1-(9Z-octadecenoyl)-sn-glycero-3-phosphate = 1-(9Z)-octadecenoyl-2-heptadecanoyl-sn-glycero-3-phosphate + CoA. It catalyses the reaction 1-(9Z-octadecenoyl)-sn-glycero-3-phosphate + octadecanoyl-CoA = 1-(9Z-octadecenoyl)-2-octadecanoyl-sn-glycero-3-phosphate + CoA. It carries out the reaction 1-(9Z-octadecenoyl)-sn-glycero-3-phosphate + (9Z,12Z)-octadecadienoyl-CoA = 1-(9Z)-octadecenoyl-2-(9Z,12Z)-octadecadienoyl-sn-glycero-3-phosphate + CoA. The enzyme catalyses 1-(9Z-octadecenoyl)-sn-glycero-3-phosphate + tetradecanoyl-CoA = 1-(9Z)-octadecenoyl-2-tetradecanoyl-sn-glycero-3-phosphate + CoA. The catalysed reaction is pentadecanoyl-CoA + 1-(9Z-octadecenoyl)-sn-glycero-3-phosphate = 1-(9Z)-octadecenoyl-2-pentadecanoyl-sn-glycero-3-phosphate + CoA. It catalyses the reaction 1-hexadecanoyl-sn-glycero-3-phosphate + (9Z)-octadecenoyl-CoA = 1-hexadecanoyl-2-(9Z-octadecenoyl)-sn-glycero-3-phosphate + CoA. It carries out the reaction 1-(9Z,12Z,15Z)-octadecatrienoyl-sn-glycero-3-phosphate + (9Z)-octadecenoyl-CoA = 1-(9Z,12Z,15Z)-octadecatrienoyl-2-(9Z)-octadecenoyl-sn-glycero-3-phosphate + CoA. The enzyme catalyses 1-(6Z,9Z,12Z-octadecatrienoyl)-sn-glycero-3-phosphate + (9Z)-octadecenoyl-CoA = (6Z,9Z,12Z)-octadecatrienoyl-2-(9Z)-octadecenoyl-sn-glycero-3-phosphate + CoA. The catalysed reaction is 1-eicosanoyl-sn-glycero-3-phosphate + (9Z)-octadecenoyl-CoA = 1-eicosanoyl-2-(9Z)-octadecenoyl-sn-glycero-3-phosphate + CoA. It catalyses the reaction 1-tetradecanoyl-sn-glycerol 3-phosphate + (9Z)-octadecenoyl-CoA = 1-tetradecanoyl-2-(9Z)-octadecenoyl-sn-glycero-3-phosphate + CoA. It carries out the reaction 1-(9Z-octadecenoyl)-sn-glycero-3-phosphate + (5Z,8Z,11Z,14Z)-eicosatetraenoyl-CoA = 1-(9Z)-octadecenoyl-2-(5Z,8Z,11Z,14Z)-eicosatetraenoyl-sn-glycero-3-phosphate + CoA. The enzyme catalyses 1-(9Z-octadecenoyl)-sn-glycero-3-phosphate + dodecanoyl-CoA = 1-(9Z)-octadecenoyl-2-dodecanoyl-sn-glycero-3-phosphate + CoA. The catalysed reaction is (6Z)-octadecenoyl-CoA + 1-(9Z-octadecenoyl)-sn-glycero-3-phosphate = 1-(9Z)-octadecenoyl-2-(6Z)-octadecenoyl-sn-glycero-3-phosphate + CoA. It catalyses the reaction (11Z)-octadecenoyl-CoA + 1-(9Z-octadecenoyl)-sn-glycero-3-phosphate = 1-(9Z)-octadecenoyl-2-(11Z)-octadecenoyl-sn-glycero-3-phosphate + CoA. It carries out the reaction (9Z)-hexadecenoyl-CoA + 1-(9Z-octadecenoyl)-sn-glycero-3-phosphate = 1-(9Z-octadecenoyl)-2-(9Z-hexadecenoyl)-sn-glycero-3-phosphate + CoA. Its pathway is phospholipid metabolism; CDP-diacylglycerol biosynthesis; CDP-diacylglycerol from sn-glycerol 3-phosphate: step 2/3. Functionally, converts 1-acyl-sn-glycerol-3-phosphate (lysophosphatidic acid or LPA) into 1,2-diacyl-sn-glycerol-3-phosphate (phosphatidic acid or PA) by incorporating an acyl moiety at the sn-2 position of the glycerol backbone. The chain is 1-acyl-sn-glycerol-3-phosphate acyltransferase alpha (AGPAT1) from Ovis aries (Sheep).